The primary structure comprises 793 residues: Splicing factor 3A subunit 1 (793 aa).

Residues 1–42 form a disordered region; the sequence is MPAGPVQAVPPPPPAATEPKQPTEEEASSKEDSTPSKPVVGI. Lysine 20 participates in a covalent cross-link: Glycyl lysine isopeptide (Lys-Gly) (interchain with G-Cter in SUMO2). Residues 21 to 34 show a composition bias toward basic and acidic residues; that stretch reads QPTEEEASSKEDST. The stretch at 52 to 94 is one SURP motif 1 repeat; that stretch reads IVDKTASFVARNGPEFEARIRQNEINNPKFNFLNPNDPYHAYY. Lysine 55 bears the N6-acetyllysine mark. Lysine 131 participates in a covalent cross-link: Glycyl lysine isopeptide (Lys-Gly) (interchain with G-Cter in SUMO2). The SURP motif 2 repeat unit spans residues 166–208; it reads VVKLTAQFVARNGRQFLTQLMQKEQRNYQFDFLRPQHSLFNYF. Residues 318–412 are disordered; sequence GESEEVEMEV…PAPAPDEYLV (95 aa). 3 positions are modified to phosphoserine: serine 320, serine 329, and serine 359. Acidic residues-rich tracts occupy residues 320–334 and 354–364; these read SEEV…EEDE and DMDEGSDDEEE. Over residues 368 to 384 the composition is skewed to pro residues; sequence VPPPPETPMPPPLPPTP. The segment covering 388-397 has biased composition (basic and acidic residues); the sequence is IVRKDYDPKA. At serine 413 the chain carries Phosphoserine. Lysine 424 participates in a covalent cross-link: Glycyl lysine isopeptide (Lys-Gly) (interchain with G-Cter in SUMO2). The residue at position 451 (serine 451) is a Phosphoserine. Tyrosine 456 is subject to Phosphotyrosine. Basic and acidic residues predominate over residues 488 to 502; the sequence is IGEEEIQKPEEKVTW. Disordered regions lie at residues 488–518, 530–584, and 666–685; these read IGEE…AAQA, HKAK…AMPP, and PMPP…SKKL. Lysine 499 participates in a covalent cross-link: Glycyl lysine isopeptide (Lys-Gly) (interchain with G-Cter in SUMO2). Serine 508 is subject to Phosphoserine. Polar residues predominate over residues 509 to 518; sequence MARTQQAAQA. A Glycyl lysine isopeptide (Lys-Gly) (interchain with G-Cter in SUMO2) cross-link involves residue lysine 542. Polar residues predominate over residues 563-572; that stretch reads ATNIPSSAPP. The segment covering 666–675 has biased composition (pro residues); it reads PMPPVHPPPP. The segment at 680 to 702 is required and sufficient for nuclear import; sequence PASKKLKTEDSLMPEEEFLRRNK. Lysine 686 is covalently cross-linked (Glycyl lysine isopeptide (Lys-Gly) (interchain with G-Cter in SUMO2)). The Ubiquitin-like domain occupies 707 to 793; that stretch reads IKVQVPNMQD…ALKERGGRKK (87 aa). At tyrosine 759 the chain carries Phosphotyrosine.

As to quaternary structure, component of the 17S U2 SnRNP complex, a ribonucleoprotein complex that contains small nuclear RNA (snRNA) U2 and a number of specific proteins. Part of the SF3A subcomplex of the 17S U2 SnRNP complex which is composed of three subunits; SF3A3/SAP61, SF3A2/SAP62 and SF3A1/SAP114. SF3A associates with the splicing factor SF3B and a 12S RNA unit to form the mature 17S U2 small nuclear ribonucleoprotein complex (17S U2 snRNP). SF3A1 functions as a scaffold that interacts directly with both SF3A2 and SF3A3. Identified in the spliceosome 'E' complex, a precursor of the spliceosome 'A' complex. Identified in the spliceosome 'A' and 'B' complexes. Identified in the spliceosome 'C' complex. Interacts with P2RX6; resulting in a reduction of the splicing activity.

The protein resides in the nucleus. The protein localises to the nucleus speckle. Its function is as follows. Component of the 17S U2 SnRNP complex of the spliceosome, a large ribonucleoprotein complex that removes introns from transcribed pre-mRNAs. The 17S U2 SnRNP complex (1) directly participates in early spliceosome assembly and (2) mediates recognition of the intron branch site during pre-mRNA splicing by promoting the selection of the pre-mRNA branch-site adenosine, the nucleophile for the first step of splicing. Within the 17S U2 SnRNP complex, SF3A1 is part of the SF3A subcomplex that contributes to the assembly of the 17S U2 snRNP, and the subsequent assembly of the pre-spliceosome 'E' complex and the pre-catalytic spliceosome 'A' complex. Involved in pre-mRNA splicing as a component of pre-catalytic spliceosome 'B' complexes. The polypeptide is Splicing factor 3A subunit 1 (SF3A1) (Bos taurus (Bovine)).